Here is a 51-residue protein sequence, read N- to C-terminus: Magnetosome protein Mms5 (51 aa).

The Lumenal portion of the chain corresponds to 1–12; the sequence is MLSAKGVSLGLG. The interval 9 to 16 is LG region; the sequence is LGLGLGLG. A helical transmembrane segment spans residues 13–33; sequence LGLGAWGPVLLGVVGVAGAIA. The Cytoplasmic portion of the chain corresponds to 34–51; the sequence is LYGYYKNRNAEPAAAEAV.

This sequence belongs to the magnetosome MamD/Mms5 family. Seen in gels as a band of about 5 kDa, with an N-terminus that corresponds to residue 8, suggesting it may undergo N-terminal cleavage.

It localises to the magnetosome membrane. In terms of biological role, might be involved in magnetite crystal growth. The protein is Magnetosome protein Mms5 of Paramagnetospirillum magneticum (strain ATCC 700264 / AMB-1) (Magnetospirillum magneticum).